We begin with the raw amino-acid sequence, 152 residues long: UPF0266 membrane protein YobD (152 aa).

The next 3 membrane-spanning stretches (helical) occupy residues 6-26 (LVLI…QFIM), 45-65 (VDSV…VTSH), and 67-87 (AQMT…IFWI).

It belongs to the UPF0266 family.

The protein resides in the cell inner membrane. This Salmonella newport (strain SL254) protein is UPF0266 membrane protein YobD.